A 453-amino-acid polypeptide reads, in one-letter code: Gamma-glutamylpolyamine synthetase GlnA2 (453 aa).

In terms of domain architecture, GS beta-grasp spans 15-100; the sequence is RDIRFVRLWF…MFCDILMPDG (86 aa). The region spanning 107-453 is the GS catalytic domain; the sequence is PRYVLKRALA…FELRKSLPVL (347 aa). Residues glutamate 130 and glutamate 132 each coordinate Mg(2+). Glutamate 182 contacts ATP. The Mg(2+) site is built by glutamate 187 and glutamate 194. An L-glutamate-binding site is contributed by glycine 239. Histidine 243 contributes to the Mg(2+) binding site. 245–247 lines the ATP pocket; that stretch reads HLS. L-glutamate-binding residues include arginine 296, glutamate 310, and arginine 322. 2 residues coordinate ATP: arginine 322 and arginine 327. Residue glutamate 342 coordinates Mg(2+). Arginine 344 serves as a coordination point for L-glutamate.

It belongs to the glutamine synthetase family. Requires Mg(2+) as cofactor.

The enzyme catalyses putrescine + L-glutamate + ATP = gamma-L-glutamylputrescine + ADP + phosphate + H(+). It catalyses the reaction spermine + L-glutamate + ATP = gamma-L-glutamylspermine + ADP + phosphate + H(+). It carries out the reaction spermidine + L-glutamate + ATP = gamma-L-glutamylspermidine + ADP + phosphate + H(+). The catalysed reaction is cadaverine + L-glutamate + ATP = gamma-L-glutamylcadaverine + ADP + phosphate + H(+). It functions in the pathway amine and polyamine degradation; putrescine degradation. It participates in amine and polyamine degradation; spermidine degradation. The protein operates within amine and polyamine degradation; spermine degradation. With respect to regulation, no effect on activity with glutamine synthetase (GS) inhibitor methionine sulfoximine (MSO). Involved in the catabolism of polyamines. Catalyzes the ATP-dependent gamma-glutamylation of polyamines. Substrates include putrescine, cadaverine, spermidine and spermine, with a preference for short-chain polyamine putrescine. No complementation of the L-glutamine auxotrophy of an E.coli glnA mutant. Together with GlnA3, enables survival of S.coelicolor under exposure to high local environmental polyamine concentrations, which is toxic to the cells. This Streptomyces coelicolor (strain ATCC BAA-471 / A3(2) / M145) protein is Gamma-glutamylpolyamine synthetase GlnA2.